The primary structure comprises 596 residues: Myosin light chain kinase 2, skeletal/cardiac muscle (596 aa).

The disordered stretch occupies residues methionine 1–threonine 224. Alanine 2 carries the post-translational modification N-acetylalanine. Residues aspartate 40–aspartate 63 show a composition bias toward basic and acidic residues. Residues glutamate 88–proline 104 show a composition bias toward low complexity. Residues serine 143, serine 149, and serine 151 each carry the phosphoserine modification. Residues arginine 189 to glutamate 209 are compositionally biased toward basic and acidic residues. Residues methionine 285–leucine 540 enclose the Protein kinase domain. Residues leucine 291–valine 299 and lysine 314 each bind ATP. Aspartate 406 functions as the Proton acceptor in the catalytic mechanism. Position 445 is a phosphothreonine (threonine 445). The tract at residues isoleucine 574 to serine 586 is calmodulin-binding.

The protein belongs to the protein kinase superfamily. CAMK Ser/Thr protein kinase family. As to quaternary structure, may interact with centrin. Heart and skeletal muscles. Increased expression in the apical tissue compared to the interventricular septal tissue.

Its subcellular location is the cytoplasm. The catalysed reaction is L-seryl-[myosin light chain] + ATP = O-phospho-L-seryl-[myosin light chain] + ADP + H(+). It carries out the reaction L-threonyl-[myosin light chain] + ATP = O-phospho-L-threonyl-[myosin light chain] + ADP + H(+). Implicated in the level of global muscle contraction and cardiac function. Phosphorylates a specific serine in the N-terminus of a myosin light chain. The protein is Myosin light chain kinase 2, skeletal/cardiac muscle (MYLK2) of Homo sapiens (Human).